A 539-amino-acid chain; its full sequence is Zinc finger and BTB domain-containing protein 7B (539 aa).

The BTB domain occupies 34–115 (CDLTIRTQGL…AYTATLTTSS (82 aa)). A Phosphoserine modification is found at Ser-150. The disordered stretch occupies residues 171 to 308 (ASGVPNGEDS…SPEELGSDED (138 aa)). Positions 182–196 (PQVPLPPPPPPPPRP) are enriched in pro residues. Residues 197–206 (VARRSRKPRK) show a composition bias toward basic residues. Lys-206 and Lys-212 each carry N6-acetyllysine; by EP300; alternate. Residues Lys-206 and Lys-212 each participate in a glycyl lysine isopeptide (Lys-Gly) (interchain with G-Cter in ubiquitin); alternate cross-link. A compositionally biased stretch (acidic residues) spans 273–282 (YEGEEEEEEL). At Lys-335 the chain carries N6-acetyllysine; by EP300; alternate. A Glycyl lysine isopeptide (Lys-Gly) (interchain with G-Cter in ubiquitin); alternate cross-link involves residue Lys-335. The tract at residues 344–400 (MPQECPVCHKIIHGAGKLPRHMRTHTGEKPFACEVCGVRFTRNDKLKIHMRKHTGER) is required for interaction with and acetylation by EP300. A C2H2-type 1 zinc finger spans residues 346 to 368 (QECPVCHKIIHGAGKLPRHMRTH). Position 369 is a phosphothreonine (Thr-369). 2 consecutive C2H2-type zinc fingers follow at residues 374-396 (FACE…MRKH) and 402-424 (YSCP…MHLH). Residues 430 to 454 (YECHLCHKAFAKEDHLQRHLKGQNC) form a C2H2-type 4; atypical zinc finger. Disordered stretches follow at residues 458-486 (RTRR…GLDL) and 501-539 (FWEQ…MESS). A compositionally biased stretch (pro residues) spans 508–517 (TGPPVSTPGP).

In terms of assembly, homodimerizes. Interacts with NCL, NEDD4 and YBX1. Interacts with HNRNPU (via RNA-binding RGG-box region); the interaction facilitates the recruitment of long non-coding RNA Blnc1 by ZBTB7B. Interacts with HDAC4 and HDAC5; the interaction allows the recruitment of HDAC4 and HDAC5 on CD8 loci for deacetylation and possible inhibition of CD8 genes expression. Post-translationally, acetylated directly and specifically by EP300. EP300-mediated acetylation of Lys-206, Lys-212 and Lys-335 stabilizes the protein by antagonizing ubiquitin conjugation. In terms of processing, ubiquitinated, leading to proteasomal degradation. Competes with acetylation on Lys-206, Lys-212 and Lys-335.

The protein localises to the nucleus. Functionally, transcription regulator that acts as a key regulator of lineage commitment of immature T-cell precursors. Exerts distinct biological functions in the mammary epithelial cells and T cells in a tissue-specific manner. Necessary and sufficient for commitment of CD4 lineage, while its absence causes CD8 commitment. Development of immature T-cell precursors (thymocytes) to either the CD4 helper or CD8 killer T-cell lineages correlates precisely with their T-cell receptor specificity for major histocompatibility complex class II or class I molecules, respectively. Cross-antagonism between ZBTB7B and CBF complexes are determinative to CD4 versus CD8 cell fate decision. Suppresses RUNX3 expression and imposes CD4+ lineage fate by inducing the SOCS suppressors of cytokine signaling. induces, as a transcriptional activator, SOCS genes expression which represses RUNX3 expression and promotes the CD4+ lineage fate. During CD4 lineage commitment, associates with multiple sites at the CD8 locus, acting as a negative regulator of the CD8 promoter and enhancers by epigenetic silencing through the recruitment of class II histone deacetylases, such as HDAC4 and HDAC5, to these loci. Regulates the development of IL17-producing CD1d-restricted naural killer (NK) T cells. Also functions as an important metabolic regulator in the lactating mammary glands. Critical feed-forward regulator of insulin signaling in mammary gland lactation, directly regulates expression of insulin receptor substrate-1 (IRS-1) and insulin-induced Akt-mTOR-SREBP signaling. Transcriptional repressor of the collagen COL1A1 and COL1A2 genes. May also function as a repressor of fibronectin and possibly other extracellular matrix genes. Potent driver of brown fat development, thermogenesis and cold-induced beige fat formation. Recruits the brown fat lncRNA 1 (Blnc1):HNRNPU ribonucleoprotein complex to activate thermogenic gene expression in brown and beige adipocytes. In Homo sapiens (Human), this protein is Zinc finger and BTB domain-containing protein 7B.